A 284-amino-acid chain; its full sequence is Deoxyribonuclease-1 (284 aa).

Residues 1-22 (MRYTGLMGTLLTLVNLLQLAGT) form the signal peptide. N-linked (GlcNAc...) asparagine glycosylation occurs at Asn-40. Glu-100 is a catalytic residue. Cysteines 123 and 126 form a disulfide. N-linked (GlcNAc...) asparagine glycosylation is present at Asn-128. The active site involves His-156. A disulfide bridge connects residues Cys-195 and Cys-231.

Belongs to the DNase I family. Ca(2+) serves as cofactor. It depends on Mg(2+) as a cofactor. N-glycosylated. Highly expressed in the parotid and submandibular gland as well as in the kidney and duodenum (at protein level). Expressed at intermediate level in the ileum, mesenterial lymph nodes, liver, ventral prostate, epididymis, ovary and stomach (at protein level). Expressed at low level in the sublingual, preputial, coagulation and pituitary gland (at protein level). Also present in the lachrymal and thyroid glands, striated muscle, intestine, the urinary bladder and the eye.

The protein localises to the secreted. It localises to the zymogen granule. Its subcellular location is the nucleus envelope. The catalysed reaction is Endonucleolytic cleavage to 5'-phosphodinucleotide and 5'-phosphooligonucleotide end-products.. Serum endocuclease secreted into body fluids by a wide variety of exocrine and endocrine organs. Expressed by non-hematopoietic tissues and preferentially cleaves protein-free DNA. Among other functions, seems to be involved in cell death by apoptosis. Binds specifically to G-actin and blocks actin polymerization. Together with DNASE1L3, plays a key role in degrading neutrophil extracellular traps (NETs). NETs are mainly composed of DNA fibers and are released by neutrophils to bind pathogens during inflammation. Degradation of intravascular NETs by DNASE1 and DNASE1L3 is required to prevent formation of clots that obstruct blood vessels and cause organ damage following inflammation. The sequence is that of Deoxyribonuclease-1 from Mus musculus (Mouse).